The sequence spans 123 residues: Large ribosomal subunit protein eL8 (123 aa).

Belongs to the eukaryotic ribosomal protein eL8 family. As to quaternary structure, may be present in up to 3 copies per 70S ribosome. Part of the 50S ribosomal subunit, where it binds 23S rRNA at its canonical site near the L1 stalk, as well as a possible second 50S binding site near helix 25 and a possible third site on the beak of the 30S subunit. Component of box C/D small ribonucleoprotein (sRNP) particles that contain rpl7ae, FlpA and nop5, plus a guide RNA. These sRNP particles form homodimers, giving rise to an asymmetric holoenzyme. Probably part of the RNase P complex.

Its subcellular location is the cytoplasm. Multifunctional RNA-binding protein that recognizes the K-turn motif in ribosomal RNA, the RNA component of RNase P, box H/ACA, box C/D and box C'/D' sRNAs. Component of the 70S ribosome. Component of a box C/D small ribonucleoprotein (sRNP) particle that is involved in pre-rRNA and tRNA processing. Utilizes the methyl donor S-adenosyl-L-methionine to catalyze the site-specific 2'-hydroxyl methylation of ribose moieties in rRNA and tRNA. Site specificity is provided by a guide RNA that base pairs with the substrate. Methylation occurs at a characteristic distance from the sequence involved in base pairing with the guide RNA. This chain is Large ribosomal subunit protein eL8, found in Pyrococcus furiosus (strain ATCC 43587 / DSM 3638 / JCM 8422 / Vc1).